A 185-amino-acid polypeptide reads, in one-letter code: Threonylcarbamoyl-AMP synthase (185 aa).

One can recognise a YrdC-like domain in the interval 4–185 (SFRAQCAARV…LVTGQVIRPA (182 aa)).

The protein belongs to the SUA5 family. TsaC subfamily.

The protein localises to the cytoplasm. The enzyme catalyses L-threonine + hydrogencarbonate + ATP = L-threonylcarbamoyladenylate + diphosphate + H2O. Functionally, required for the formation of a threonylcarbamoyl group on adenosine at position 37 (t(6)A37) in tRNAs that read codons beginning with adenine. Catalyzes the conversion of L-threonine, HCO(3)(-)/CO(2) and ATP to give threonylcarbamoyl-AMP (TC-AMP) as the acyladenylate intermediate, with the release of diphosphate. The protein is Threonylcarbamoyl-AMP synthase of Pseudomonas aeruginosa (strain UCBPP-PA14).